The chain runs to 164 residues: Peroxynitrite isomerase 2 (164 aa).

A GXWXGXG motif is present at residues 17–23 (GSWAGRG). H155 is a heme b binding site.

Belongs to the nitrobindin family. In terms of assembly, homodimer. The cofactor is heme b.

The enzyme catalyses peroxynitrite = nitrate. It participates in nitrogen metabolism. Functionally, heme-binding protein able to scavenge peroxynitrite and to protect free L-tyrosine against peroxynitrite-mediated nitration, by acting as a peroxynitrite isomerase that converts peroxynitrite to nitrate. Therefore, this protein likely plays a role in peroxynitrite sensing and in the detoxification of reactive nitrogen and oxygen species (RNS and ROS, respectively). Is able to bind nitric oxide (NO) in vitro, but may act as a sensor of peroxynitrite levels in vivo. The sequence is that of Peroxynitrite isomerase 2 from Mycobacterium bovis (strain BCG / Pasteur 1173P2).